The sequence spans 546 residues: 2-isopropylmalate synthase (546 aa).

Positions Ile-8 to Ser-271 constitute a Pyruvate carboxyltransferase domain. Positions 17, 208, 210, and 244 each coordinate Mn(2+). The regulatory domain stretch occupies residues Gln-408–Asn-546.

The protein belongs to the alpha-IPM synthase/homocitrate synthase family. LeuA type 1 subfamily. In terms of assembly, homodimer. It depends on Mn(2+) as a cofactor.

It is found in the cytoplasm. It catalyses the reaction 3-methyl-2-oxobutanoate + acetyl-CoA + H2O = (2S)-2-isopropylmalate + CoA + H(+). It functions in the pathway amino-acid biosynthesis; L-leucine biosynthesis; L-leucine from 3-methyl-2-oxobutanoate: step 1/4. Functionally, catalyzes the condensation of the acetyl group of acetyl-CoA with 3-methyl-2-oxobutanoate (2-ketoisovalerate) to form 3-carboxy-3-hydroxy-4-methylpentanoate (2-isopropylmalate). In Prochlorococcus marinus (strain MIT 9515), this protein is 2-isopropylmalate synthase.